Reading from the N-terminus, the 358-residue chain is Protein-arginine kinase (358 aa).

The region spanning 23-250 (VWPVTTFSLA…SKLSVAEVAA (228 aa)) is the Phosphagen kinase C-terminal domain. Residues 26 to 30 (VTTFS), 174 to 178 (KSQCF), and 203 to 208 (SSLLLG) each bind ATP.

The protein belongs to the ATP:guanido phosphotransferase family.

The catalysed reaction is L-arginyl-[protein] + ATP = N(omega)-phospho-L-arginyl-[protein] + ADP + H(+). Functionally, catalyzes the specific phosphorylation of arginine residues in proteins. The protein is Protein-arginine kinase of Chlamydia pneumoniae (Chlamydophila pneumoniae).